Reading from the N-terminus, the 221-residue chain is Secreted protein BARF1 (221 aa).

The first 20 residues, 1–20 (MARFIAQLLLLASCVAAGQA), serve as a signal peptide directing secretion. Ig-like domains follow at residues 21-120 (VTAF…EHLS) and 124-220 (PLTL…GYLS). An N-linked (GlcNAc...) asparagine; by host glycan is attached at Asn-95. A disulfide bridge connects residues Cys-146 and Cys-201.

As to quaternary structure, homohexamer. Interacts with human CSF1. Post-translationally, phosphorylated on serine and threonine by host.

The protein localises to the secreted. In terms of biological role, plays diverse functions in immunomodulation and oncogenicity, maybe by acting as a functional receptor for human CSF1. May inhibit interferon secretion from mononuclear cells. Exhibits oncogenic activity in vitro. The protein is Secreted protein BARF1 of Epstein-Barr virus (strain B95-8) (HHV-4).